The chain runs to 351 residues: Protein-glutamate methylesterase/protein-glutamine glutaminase (351 aa).

Positions 3–120 (KTLVVDDSAL…EISKIENELV (118 aa)) constitute a Response regulatory domain. A 4-aspartylphosphate modification is found at Asp-54. The 188-residue stretch at 160–347 (ILIGSSTGGP…EQIVRMIEVK (188 aa)) folds into the CheB-type methylesterase domain. Catalysis depends on residues Ser-165, His-192, and Asp-289.

This sequence belongs to the CheB family. Phosphorylated by CheA. Phosphorylation of the N-terminal regulatory domain activates the methylesterase activity.

The protein localises to the cytoplasm. The enzyme catalyses [protein]-L-glutamate 5-O-methyl ester + H2O = L-glutamyl-[protein] + methanol + H(+). It catalyses the reaction L-glutaminyl-[protein] + H2O = L-glutamyl-[protein] + NH4(+). In terms of biological role, involved in chemotaxis. Part of a chemotaxis signal transduction system that modulates chemotaxis in response to various stimuli. Catalyzes the demethylation of specific methylglutamate residues introduced into the chemoreceptors (methyl-accepting chemotaxis proteins or MCP) by CheR. Also mediates the irreversible deamidation of specific glutamine residues to glutamic acid. In Methanococcoides burtonii (strain DSM 6242 / NBRC 107633 / OCM 468 / ACE-M), this protein is Protein-glutamate methylesterase/protein-glutamine glutaminase.